A 257-amino-acid chain; its full sequence is Transmembrane protein C257L (257 aa).

A run of 2 helical transmembrane segments spans residues 123-143 (LELL…FTAL) and 163-183 (MMIF…YVLV).

It belongs to the asfivirus C257R family.

It localises to the host membrane. It is found in the virion. The sequence is that of Transmembrane protein C257L from Ornithodoros (relapsing fever ticks).